Reading from the N-terminus, the 248-residue chain is Orotidine 5'-phosphate decarboxylase (248 aa).

Substrate is bound by residues Asp-22, Lys-44, 71-80, Thr-131, Arg-192, Gln-201, Gly-221, and Arg-222; that span reads DLKFHDIPNT. Lys-73 functions as the Proton donor in the catalytic mechanism.

This sequence belongs to the OMP decarboxylase family. Type 1 subfamily. Homodimer.

It catalyses the reaction orotidine 5'-phosphate + H(+) = UMP + CO2. Its pathway is pyrimidine metabolism; UMP biosynthesis via de novo pathway; UMP from orotate: step 2/2. Catalyzes the decarboxylation of orotidine 5'-monophosphate (OMP) to uridine 5'-monophosphate (UMP). The chain is Orotidine 5'-phosphate decarboxylase from Photorhabdus laumondii subsp. laumondii (strain DSM 15139 / CIP 105565 / TT01) (Photorhabdus luminescens subsp. laumondii).